The sequence spans 357 residues: MESVEKTTNRSEQKCRKFLKSLIRKQPQDLLLVIGTGVSAAVAPGIRALCSWRSCIEAVIEAAEQLEVLHPGDVAEFRRKVMKDRDLLVVAHDLIRKMSPRTGDTKPNFFQDCLMEVFDSLEQHIQNPVVLRSILSLMDRGTMVLTTNYDNLLEIFGQQQSKPMESLDLKDKTKVLQWARGHIKYGVLHIHGLYTDPCGMVLDPSGYKDVTQDPEVMEVLQNLYRTKSFLFVGCGETLRDQIFQALFLYSVPNKVDLEHYMVVLKENEDHFFKHQADMLLHGIKVVSYGDCFDLFPGYVQDLATQICKQRSPDAERVDSTTLLGNACQDCAKRKLEENGIEVTKKVRQSDTDDAGGS.

N-acetylmethionine is present on Met1. Residues Leu30–Ile46 traverse the membrane as a helical segment. Phosphoserine is present on Ser311.

The protein belongs to the FAM118 family.

It localises to the membrane. The chain is Protein FAM118A (Fam118a) from Mus musculus (Mouse).